Here is a 1205-residue protein sequence, read N- to C-terminus: Transcriptional-regulating factor 1 (1205 aa).

Disordered regions lie at residues 201 to 226 (YQQV…VGQH), 270 to 317 (YPQP…QRQS), 332 to 351 (QHLQ…SYHR), 390 to 500 (PQSH…QTKG), 527 to 583 (LNGH…PEAE), and 601 to 629 (PKPS…MSDD). 2 stretches are compositionally biased toward low complexity: residues 291–317 (QQQQ…QRQS) and 332–342 (QHLQEQQQPSM). Polar residues-rich tracts occupy residues 406–417 (KTYSSDRQTPAM), 437–447 (SEMTRVTSTLP), and 487–498 (QSGSPESSSGQT). Phosphoserine is present on S490. A C2H2-type 1 zinc finger spans residues 512 to 534 (LTCSICLKEFKSLPALNGHMRSH). The span at 551–579 (APPPQPQPQPQPQQPLPPPPPPPPPPQLP) shows a compositional bias: pro residues. Positions 604 to 613 (SSQGFTNSVA) are enriched in polar residues. An N6-acetyllysine mark is found at K639 and K646. At T773 the chain carries Phosphothreonine. The ELM2 domain occupies 785–876 (PRINIGLRFQ…ATLEMLLLRK (92 aa)). The region spanning 891 to 942 (AGSDKWTSLERKLFNKALATYSKDFIFVQKMVKSKTVAQCVEYYYTWKKIMR) is the SANT domain. The segment covering 956–975 (DDCMTSEEEEEAEEEEEDPE) has biased composition (acidic residues). 2 disordered regions span residues 956–1016 (DDCM…QQPS) and 1043–1087 (HGGT…GETD). Phosphothreonine is present on T960. Residue S961 is modified to Phosphoserine. Over residues 976 to 990 (EDRKSIKEEESEVAK) the composition is skewed to basic and acidic residues. The C2H2-type 2 zinc-finger motif lies at 1019-1043 (FICEMPNCGAVFSSRQALNGHARIH). Over residues 1072–1086 (SVKSSPSHSTTSGET) the composition is skewed to low complexity. Residues 1092-1114 (FPCKECGKVFFKIKSRNAHMKTH) form a C2H2-type 3 zinc finger.

In terms of assembly, interacts with CREBBP and EP300. Interacts with DNTTIP1 and DNTT. Highly expressed in kidney, lung and brain. In the brain, expression was seen in the basal ganglia, hippocampus, piriform cortex, cerebral cortex, ventromedial nucleus of the hypothalamus and the dorsal and superior central nuclei of the raphe.

The protein resides in the nucleus. Functionally, binds DNA and activates transcription of CYP11A1. Interaction with CREBBP and EP300 results in a synergistic transcriptional activation of CYP11A1. This chain is Transcriptional-regulating factor 1 (Trerf1), found in Mus musculus (Mouse).